The chain runs to 388 residues: MFVRALSLRDFRSWEHVELELSTGRTVFLGANGNGKTNLLEAVGYLATLGSHRVSADAPLIRSGAQRARVGANVVNAGRELRIDVELNQGSANRAQINRSPVRRTREILGILQTVLFAPEDLALVRGDPGERRRFLDELCTARLPRLAGVRADYDRVLRQRSALLKTAGRHARSTADLSTLDVWDGHLAGHAAVLVAQRLRLVHDLFPYLAEAYRSLAPESRPAAIGYRSAYLPGEFLDPARAPRDDDAAALEEIILRELAAARRKELERGVCLVGPHRDELELMLGDTPAKGFASHGESWSFALALRLASFDLLRSTSAEPVLLLDDVFAELDRRRRTALAAVAADAEQVLITAAVPEDVPAELSATPIRVATAGEAGHRTSHIVTG.

ATP is bound at residue 30–37 (GANGNGKT).

This sequence belongs to the RecF family.

The protein resides in the cytoplasm. The RecF protein is involved in DNA metabolism; it is required for DNA replication and normal SOS inducibility. RecF binds preferentially to single-stranded, linear DNA. It also seems to bind ATP. The protein is DNA replication and repair protein RecF of Nocardia farcinica (strain IFM 10152).